Consider the following 166-residue polypeptide: MADEATRKAVSEIPLLKTNSGPRDKELWVQRLREEYLALIKYVENNKAADNDWFRLESNKEGTRWFGKCWYIHELLKYEFDMEFDIPVTYPATAPEVAIPELDGKTAKMYRGGKICLTDHFKPLWARNVPKFGLAHLMALGLGPWLAVEIPDLIAKGLIQHKDQNS.

The active-site Glycyl thioester intermediate is Cys116.

It belongs to the ubiquitin-conjugating enzyme family. UFC1 subfamily. As to quaternary structure, interacts with UBA5 (via C-terminus). Interacts with UFL1. Interacts with UFM1.

Its function is as follows. E2-like enzyme which specifically catalyzes the second step in ufmylation. Accepts the ubiquitin-like modifier UFM1 from the E1 enzyme UBA5 and forms an intermediate with UFM1 via a thioester linkage. Ufmylation is involved in various processes, such as ribosome recycling, response to DNA damage, interferon response or reticulophagy (also called ER-phagy). This is Ubiquitin-fold modifier-conjugating enzyme 1 (ufc1) from Danio rerio (Zebrafish).